The primary structure comprises 159 residues: Transcription elongation factor GreA (159 aa).

This sequence belongs to the GreA/GreB family.

In terms of biological role, necessary for efficient RNA polymerase transcription elongation past template-encoded arresting sites. The arresting sites in DNA have the property of trapping a certain fraction of elongating RNA polymerases that pass through, resulting in locked ternary complexes. Cleavage of the nascent transcript by cleavage factors such as GreA or GreB allows the resumption of elongation from the new 3'terminus. GreA releases sequences of 2 to 3 nucleotides. This chain is Transcription elongation factor GreA, found in Orientia tsutsugamushi (strain Boryong) (Rickettsia tsutsugamushi).